An 86-amino-acid chain; its full sequence is Large ribosomal subunit protein eL30 (86 aa).

The protein belongs to the eukaryotic ribosomal protein eL30 family.

The polypeptide is Large ribosomal subunit protein eL30 (rpl30e) (Archaeoglobus fulgidus (strain ATCC 49558 / DSM 4304 / JCM 9628 / NBRC 100126 / VC-16)).